A 141-amino-acid polypeptide reads, in one-letter code: High mobility group B protein 3 (141 aa).

2 stretches are compositionally biased toward basic and acidic residues: residues 1–12 (MKGAKSKAETRS) and 70–110 (GGEK…LEEG). Disordered stretches follow at residues 1–40 (MKGAKSKAETRSTKLSVTKKPAKGAKGAAKDPNKPKRPSS) and 54–141 (KEEH…EDDD). A DNA-binding region (HMG box) is located at residues 35 to 104 (PKRPSSAFFV…EYEKNMKAYN (70 aa)). Serine 122 is modified (phosphoserine). Residues 124 to 141 (VNDEDDAEDGSEEEEDDD) show a composition bias toward acidic residues.

It belongs to the HMGB family. As to expression, expressed in lateral roots, root tips, stems, cotyledons, leaves and flowers (excluding ovary and pedicels).

The protein resides in the nucleus. It is found in the cytoplasm. The protein localises to the cytosol. Binds preferentially double-stranded DNA. In Arabidopsis thaliana (Mouse-ear cress), this protein is High mobility group B protein 3 (HMGB3).